A 1210-amino-acid chain; its full sequence is Microtubule-associated tumor suppressor 1 homolog (1210 aa).

Disordered stretches follow at residues 1–21 (MNDD…IRDK), 370–404 (DPHI…PYEM), 446–482 (VENG…NTTV), 513–545 (QPKD…LTMM), and 585–618 (HSKN…AGSE). Basic and acidic residues predominate over residues 370–379 (DPHIDSHDND). A phosphoserine mark is found at S375, S380, and S393. Over residues 381–398 (DIQSSTEELTLRSVSGQR) the composition is skewed to polar residues. A compositionally biased stretch (basic and acidic residues) spans 446–455 (VENGPRDAKR). A compositionally biased stretch (polar residues) spans 473-482 (KSATKTNTTV). Residues 524 to 534 (PSPQVTGGSSP) show a composition bias toward low complexity. Over residues 585–605 (HSKNASLGVPRTTSATKSNQE) the composition is skewed to polar residues. At S621 the chain carries Phosphoserine. A disordered region spans residues 683–771 (SKSLLVGSAP…YEEKPPKQAF (89 aa)). Residues 692-702 (PKTSTTPGRSS) show a composition bias toward polar residues. Positions 876–1171 (IQHLLSEREE…RLSMENEELL (296 aa)) form a coiled coil. 9 positions are modified to phosphoserine: S1143, S1164, S1185, S1195, S1199, S1201, S1203, S1204, and S1208. The tract at residues 1177-1210 (GDLCSPKRSPTSSAIPFQSPRNSGSFSSPSISPR) is disordered. Low complexity predominate over residues 1195–1210 (SPRNSGSFSSPSISPR).

This sequence belongs to the MTUS1 family. As to quaternary structure, homodimer. Interacts with AGTR2. Interacts with PTPN6. Ubiquitously expressed, with highest levels in uterus and adrenal gland.

Its subcellular location is the mitochondrion. The protein resides in the golgi apparatus. It is found in the cell membrane. The protein localises to the nucleus. In terms of biological role, cooperates with AGTR2 to inhibit ERK2 activation and cell proliferation. May be required for AGTR2 cell surface expression. Together with PTPN6, induces UBE2V2 expression upon angiotensin-II stimulation. The polypeptide is Microtubule-associated tumor suppressor 1 homolog (Mtus1) (Mus musculus (Mouse)).